A 595-amino-acid chain; its full sequence is Glutamyl-tRNA(Gln) amidotransferase subunit B, mitochondrial (595 aa).

Residues 1–72 constitute a mitochondrion transit peptide; that stretch reads MPRLWYSRYL…RAKSQSRNGR (72 aa).

This sequence belongs to the GatB/GatE family. GatB subfamily. Subunit of the heterotrimeric GatCAB amidotransferase (AdT) complex, composed of A, B and C subunits.

It localises to the mitochondrion. The catalysed reaction is L-glutamyl-tRNA(Gln) + L-glutamine + ATP + H2O = L-glutaminyl-tRNA(Gln) + L-glutamate + ADP + phosphate + H(+). In terms of biological role, allows the formation of correctly charged Gln-tRNA(Gln) through the transamidation of misacylated Glu-tRNA(Gln) in the mitochondria. The reaction takes place in the presence of glutamine and ATP through an activated gamma-phospho-Glu-tRNA(Gln). This is Glutamyl-tRNA(Gln) amidotransferase subunit B, mitochondrial from Talaromyces marneffei (strain ATCC 18224 / CBS 334.59 / QM 7333) (Penicillium marneffei).